The chain runs to 219 residues: FMN-dependent NADH:quinone oxidoreductase 2 (219 aa).

Residues S10 and 23–25 (SIS) contribute to the FMN site.

It belongs to the azoreductase type 1 family. In terms of assembly, homodimer. It depends on FMN as a cofactor.

The enzyme catalyses 2 a quinone + NADH + H(+) = 2 a 1,4-benzosemiquinone + NAD(+). The catalysed reaction is N,N-dimethyl-1,4-phenylenediamine + anthranilate + 2 NAD(+) = 2-(4-dimethylaminophenyl)diazenylbenzoate + 2 NADH + 2 H(+). Quinone reductase that provides resistance to thiol-specific stress caused by electrophilic quinones. In terms of biological role, also exhibits azoreductase activity. Catalyzes the reductive cleavage of the azo bond in aromatic azo compounds to the corresponding amines. The sequence is that of FMN-dependent NADH:quinone oxidoreductase 2 from Colwellia psychrerythraea (strain 34H / ATCC BAA-681) (Vibrio psychroerythus).